Reading from the N-terminus, the 344-residue chain is Neurotrimin (344 aa).

The first 33 residues, 1-33, serve as a signal peptide directing secretion; the sequence is MGVCGYLFLPWKCLVVVSLRLLFLVPTGVPVRS. Ig-like C2-type domains lie at 39 to 126, 136 to 218, and 222 to 309; these read PKAM…PKTS, PKIV…VKVT, and PPYI…ASIM. N-linked (GlcNAc...) asparagine glycosylation is found at Asn44, Asn70, and Asn152. Cys57 and Cys115 are joined by a disulfide. Disulfide bonds link Cys157-Cys201 and Cys243-Cys295. 3 N-linked (GlcNAc...) asparagine glycosylation sites follow: Asn284, Asn292, and Asn305. Asn321 is lipidated: GPI-anchor amidated asparagine; alternate. Residue Asn321 is glycosylated (N-linked (GlcNAc...) asparagine; alternate). A propeptide spans 322–344 (removed in mature form); the sequence is GTSRRAGCIWLLPLLVLHLLLKF.

Belongs to the immunoglobulin superfamily. IgLON family.

The protein resides in the cell membrane. In terms of biological role, neural cell adhesion molecule. The protein is Neurotrimin (Ntm) of Mus musculus (Mouse).